The following is a 293-amino-acid chain: 4-hydroxy-tetrahydrodipicolinate synthase (293 aa).

T50 serves as a coordination point for pyruvate. The Proton donor/acceptor role is filled by Y138. The Schiff-base intermediate with substrate role is filled by K166. V206 contributes to the pyruvate binding site.

The protein belongs to the DapA family. In terms of assembly, homotetramer; dimer of dimers.

The protein localises to the cytoplasm. It catalyses the reaction L-aspartate 4-semialdehyde + pyruvate = (2S,4S)-4-hydroxy-2,3,4,5-tetrahydrodipicolinate + H2O + H(+). It functions in the pathway amino-acid biosynthesis; L-lysine biosynthesis via DAP pathway; (S)-tetrahydrodipicolinate from L-aspartate: step 3/4. In terms of biological role, catalyzes the condensation of (S)-aspartate-beta-semialdehyde [(S)-ASA] and pyruvate to 4-hydroxy-tetrahydrodipicolinate (HTPA). The protein is 4-hydroxy-tetrahydrodipicolinate synthase of Cutibacterium acnes (strain DSM 16379 / KPA171202) (Propionibacterium acnes).